The following is a 184-amino-acid chain: dCTP deaminase (184 aa).

Residues 107-112, 131-133, Gln-152, Tyr-166, and Gln-176 each bind dCTP; these read KSTYAR and TLE. Glu-133 functions as the Proton donor/acceptor in the catalytic mechanism.

It belongs to the dCTP deaminase family. In terms of assembly, homotrimer.

It catalyses the reaction dCTP + H2O + H(+) = dUTP + NH4(+). It functions in the pathway pyrimidine metabolism; dUMP biosynthesis; dUMP from dCTP (dUTP route): step 1/2. Functionally, catalyzes the deamination of dCTP to dUTP. This chain is dCTP deaminase, found in Gemmatimonas aurantiaca (strain DSM 14586 / JCM 11422 / NBRC 100505 / T-27).